The primary structure comprises 247 residues: NAD-dependent protein deacetylase (247 aa).

Residues M1 to K244 form the Deacetylase sirtuin-type domain. NAD(+)-binding residues include A22, T26, F33, R34, Q98, I100, D101, and H116. F33 serves as a coordination point for nicotinamide. Nicotinamide is bound by residues I100 and D101. H116 (proton acceptor) is an active-site residue. Residues C124, C127, C149, and C151 each contribute to the Zn(2+) site. NAD(+) is bound by residues S187, S188, N212, and V230.

It belongs to the sirtuin family. Class U subfamily. Monomer. The cofactor is Zn(2+).

It is found in the cytoplasm. It carries out the reaction N(6)-acetyl-L-lysyl-[protein] + NAD(+) + H2O = 2''-O-acetyl-ADP-D-ribose + nicotinamide + L-lysyl-[protein]. Its function is as follows. NAD-dependent protein deacetylase which modulates the activities of several enzymes which are inactive in their acetylated form. Deacetylates the N-terminal lysine residue of albA1, the major archaeal DNA compaction protein and that, in turn, increases albA1's DNA binding affinity, thereby repressing transcription. The sequence is that of NAD-dependent protein deacetylase from Saccharolobus solfataricus (strain ATCC 35092 / DSM 1617 / JCM 11322 / P2) (Sulfolobus solfataricus).